The following is a 333-amino-acid chain: MIDITLPLTDIHRHLDGNIRAQTILDLGRQFNIALPAQTLETLIPHVQVTSTEPDLVSFLTKLDWGVKVLASLDACRRVAFENIEDAARNGLHYVELRFSPGYMAMAHQLPIAGVVEAVIDGVRDGCNTFGVEARLIGIMSRTFGEAACLQELDALLAHRENITALDLAGDELGFPGSLFLSHFNRARDAGWHITVHAGEAAGPESIWQAIRELGAERIGHGVKAVEDRTLMDFLAQQRIGIESCLTSNIQTSTVASLADHPLKTFLEHGVLASLNTDDPAVQGVDIIHEYHVAAPAAGLSREQIRQAQINGLEIAFLSDGEKRALREKVAAA.

Zn(2+) contacts are provided by His-12 and His-14. Positions 14, 16, and 170 each coordinate substrate. A Zn(2+)-binding site is contributed by His-197. Glu-200 (proton donor) is an active-site residue. Asp-278 serves as a coordination point for Zn(2+). Residue Asp-279 coordinates substrate.

It belongs to the metallo-dependent hydrolases superfamily. Adenosine and AMP deaminases family. Adenosine deaminase subfamily. It depends on Zn(2+) as a cofactor.

It catalyses the reaction adenosine + H2O + H(+) = inosine + NH4(+). It carries out the reaction 2'-deoxyadenosine + H2O + H(+) = 2'-deoxyinosine + NH4(+). Catalyzes the hydrolytic deamination of adenosine and 2-deoxyadenosine. The sequence is that of Adenosine deaminase from Salmonella dublin (strain CT_02021853).